Reading from the N-terminus, the 234-residue chain is Sugar fermentation stimulation protein homolog (234 aa).

The protein belongs to the SfsA family.

The chain is Sugar fermentation stimulation protein homolog from Pectobacterium atrosepticum (strain SCRI 1043 / ATCC BAA-672) (Erwinia carotovora subsp. atroseptica).